Reading from the N-terminus, the 144-residue chain is Nucleoside diphosphate kinase (144 aa).

6 residues coordinate ATP: Lys-11, Phe-59, Arg-87, Thr-93, Arg-104, and Asn-114. His-117 acts as the Pros-phosphohistidine intermediate in catalysis.

It belongs to the NDK family. In terms of assembly, homotetramer. Requires Mg(2+) as cofactor.

The protein localises to the cytoplasm. The enzyme catalyses a 2'-deoxyribonucleoside 5'-diphosphate + ATP = a 2'-deoxyribonucleoside 5'-triphosphate + ADP. The catalysed reaction is a ribonucleoside 5'-diphosphate + ATP = a ribonucleoside 5'-triphosphate + ADP. In terms of biological role, major role in the synthesis of nucleoside triphosphates other than ATP. The ATP gamma phosphate is transferred to the NDP beta phosphate via a ping-pong mechanism, using a phosphorylated active-site intermediate. This is Nucleoside diphosphate kinase from Psychromonas ingrahamii (strain DSM 17664 / CCUG 51855 / 37).